The following is a 140-amino-acid chain: Cystatin-C (140 aa).

Residues 1–20 (MASPLRSLMLLLAVLAVAWA) form the signal peptide. Residues 75 to 79 (QLVAG) carry the Secondary area of contact motif. 2 disulfides stabilise this stretch: cysteine 93–cysteine 103 and cysteine 117–cysteine 137. The N-linked (GlcNAc...) asparagine glycan is linked to asparagine 99.

The protein belongs to the cystatin family.

It localises to the secreted. Its function is as follows. As an inhibitor of cysteine proteinases, this protein is thought to serve an important physiological role as a local regulator of this enzyme activity. Known to inhibit cathepsin B, H, and L. This Rattus norvegicus (Rat) protein is Cystatin-C (Cst3).